We begin with the raw amino-acid sequence, 153 residues long: Protein ripply2.2 (153 aa).

Positions 58 to 61 (WRPW) match the WRPW motif; required for transcriptional repression and interaction with tle4 motif. Residues 93 to 128 (HPVRLFWPKSKLLDNTYQEAADLLRNFPVQATISLY) form a ripply homology domain region. The interval 127 to 153 (LYNDSESDTDNEEDSSEEEQDSGFESE) is disordered. Over residues 131-153 (SESDTDNEEDSSEEEQDSGFESE) the composition is skewed to acidic residues.

Belongs to the ripply family. As to quaternary structure, interacts with tle4 and tbx6, and mediates interaction between these proteins. Expressed in the presomitic mesoderm (PSM) in the anterior halves of somitomeres S-I, S-II and S-III.

The protein resides in the nucleus. In terms of biological role, required during somitogenesis for the formation of somite boundaries. Represses the expression of genes involved in somite segmentation by acting with the corepressor tle4 to down-regulate the transcriptional activity of tbx6. May act by regulating the activity of tle4. Represses transcription of delta2, thy1 and ripply2.2/bowline itself. The chain is Protein ripply2.2 (ripply2.2) from Xenopus laevis (African clawed frog).